The primary structure comprises 499 residues: Bifunctional purine biosynthesis protein PurH (499 aa).

Positions 1–144 (MIKRALISVF…KNFKDVVVLT (144 aa)) constitute an MGS-like domain.

The protein belongs to the PurH family.

It carries out the reaction (6R)-10-formyltetrahydrofolate + 5-amino-1-(5-phospho-beta-D-ribosyl)imidazole-4-carboxamide = 5-formamido-1-(5-phospho-D-ribosyl)imidazole-4-carboxamide + (6S)-5,6,7,8-tetrahydrofolate. The catalysed reaction is IMP + H2O = 5-formamido-1-(5-phospho-D-ribosyl)imidazole-4-carboxamide. It participates in purine metabolism; IMP biosynthesis via de novo pathway; 5-formamido-1-(5-phospho-D-ribosyl)imidazole-4-carboxamide from 5-amino-1-(5-phospho-D-ribosyl)imidazole-4-carboxamide (10-formyl THF route): step 1/1. It functions in the pathway purine metabolism; IMP biosynthesis via de novo pathway; IMP from 5-formamido-1-(5-phospho-D-ribosyl)imidazole-4-carboxamide: step 1/1. This chain is Bifunctional purine biosynthesis protein PurH, found in Clostridium botulinum (strain 657 / Type Ba4).